The primary structure comprises 51 residues: Large ribosomal subunit protein bL33 (51 aa).

This sequence belongs to the bacterial ribosomal protein bL33 family. In terms of assembly, part of the 50S ribosomal subunit. Cross-links to the P and E site tRNAs.

The sequence is that of Large ribosomal subunit protein bL33 from Pseudomonas aeruginosa (strain ATCC 15692 / DSM 22644 / CIP 104116 / JCM 14847 / LMG 12228 / 1C / PRS 101 / PAO1).